Here is a 147-residue protein sequence, read N- to C-terminus: Large ribosomal subunit protein uL15 (147 aa).

The disordered stretch occupies residues 1-47 (MKLHELKPAEGAVRAKRRLGRGTATGQGKTAGRGQKGQWSRSGGGVR). The segment covering 23–35 (TATGQGKTAGRGQ) has biased composition (gly residues).

This sequence belongs to the universal ribosomal protein uL15 family. As to quaternary structure, part of the 50S ribosomal subunit.

Its function is as follows. Binds to the 23S rRNA. In Clostridioides difficile (strain 630) (Peptoclostridium difficile), this protein is Large ribosomal subunit protein uL15.